The sequence spans 718 residues: Serine/threonine-protein kinase tousled-like 2 (718 aa).

The tract at residues Gly-24–Ser-85 is disordered. Over residues Pro-29–Ser-44 the composition is skewed to polar residues. Basic and acidic residues predominate over residues Ser-46–Arg-61. Phosphoserine is present on residues Ser-73, Gln-94, Leu-99, and Ser-102. A disordered region spans residues Gln-147–Thr-176. The required for interaction with TLK1 and DYNLL1/LC8 stretch occupies residues Asn-193–Glu-244. 3 coiled-coil regions span residues Asn-193–Glu-244, Ala-285–Pro-315, and His-349–Gln-397. Residues Leu-310 to Gly-337 form a disordered region. In terms of domain architecture, Protein kinase spans Tyr-408–Leu-687. ATP is bound by residues Leu-414–Val-422 and Lys-437. Residue Asp-538 is the Proton acceptor of the active site. Ser-696 is modified (phosphoserine; by CHEK1).

It belongs to the protein kinase superfamily. Ser/Thr protein kinase family. As to quaternary structure, monomer. May form homodimers; homodimerization may enhance autophosphoylation and enzymatic activity. Heterodimer with TLK1. Interacts with YWHAZ; association with 14-3-3 proteins such as YWHAZ regulates subcellular location. May also interact with FEZ1/LZTS1 and FEZ2. Interacts with CHD7 and CHD8. Interacts with DYNLL1/LC8. It depends on Mg(2+) as a cofactor. In terms of processing, phosphorylated at Ser-696, probably by CHEK1. Post-translationally, autophosphorylated; phosphorylation promotes the assembly of higher order oligomers and enzymatic activity. Ubiquitously expressed in all tissues examined, with high levels in heart and testis, in particular the pachytene spermatocytes and in round spermatids. Some evidence for the existence of a testis-specific isoform suggesting a role in spermatogenesis.

Its subcellular location is the nucleus. The protein resides in the nucleoplasm. It localises to the cytoplasm. The protein localises to the perinuclear region. It is found in the cytoskeleton. The catalysed reaction is L-seryl-[protein] + ATP = O-phospho-L-seryl-[protein] + ADP + H(+). It carries out the reaction L-threonyl-[protein] + ATP = O-phospho-L-threonyl-[protein] + ADP + H(+). Its activity is regulated as follows. Cell cycle-regulated, with maximal activity in the S-phase. Rapidly and transiently inhibited by phosphorylation following the generation of DNA double-stranded breaks during S-phase, probably by CHEK1, possibly at Ser-696. This inhibition is cell cycle checkpoint- and ATM-dependent. Serine/threonine-protein kinase involved in the process of chromatin assembly and probably also DNA replication, transcription, repair, and chromosome segregation. Phosphorylates the chromatin assembly factors ASF1A and ASF1B. Phosphorylation of ASF1A prevents its proteasome-mediated degradation, thereby enhancing chromatin assembly. Negative regulator of amino acid starvation-induced autophagy. In terms of biological role, testis-specific isoforms may play a role in spermatogenesis. Highly expressed in embryos throughout development. The sequence is that of Serine/threonine-protein kinase tousled-like 2 (Tlk2) from Mus musculus (Mouse).